We begin with the raw amino-acid sequence, 296 residues long: Myozenin-1 (296 aa).

Ser-82 bears the Phosphoserine mark. Composition is skewed to gly residues over residues 105-117 (FSYGKGSSGGQAG) and 134-170 (SGFGAGGSGGPGGQAGGGGAPGTVGLGEPGSGDQAGG). The disordered stretch occupies residues 105 to 172 (FSYGKGSSGG…GSGDQAGGDG (68 aa)).

Belongs to the myozenin family. Interacts with ACTN2, ACTN3, FLNA, FLNB, FLNC, LDB3, PPP3CA and TCAP. Interacts via its C-terminal region with MYOT. Expressed primarily in skeletal muscle and specifically enriched in the gastrocnemius, which is composed predominantly of fast-twitch muscle fibers. Detected at lower levels in heart.

It is found in the nucleus. It localises to the cell projection. The protein resides in the pseudopodium. In terms of biological role, myozenins may serve as intracellular binding proteins involved in linking Z-disk proteins such as alpha-actinin, gamma-filamin, TCAP/telethonin, LDB3/ZASP and localizing calcineurin signaling to the sarcomere. Plays an important role in the modulation of calcineurin signaling. May play a role in myofibrillogenesis. The polypeptide is Myozenin-1 (Mus musculus (Mouse)).